A 425-amino-acid polypeptide reads, in one-letter code: Glutamyl-tRNA reductase (425 aa).

Substrate-binding positions include 49 to 52 (TCNR), Ser-109, 114 to 116 (EGQ), and Gln-120. Cys-50 (nucleophile) is an active-site residue. 189 to 194 (GAGETG) serves as a coordination point for NADP(+).

It belongs to the glutamyl-tRNA reductase family. Homodimer.

It catalyses the reaction (S)-4-amino-5-oxopentanoate + tRNA(Glu) + NADP(+) = L-glutamyl-tRNA(Glu) + NADPH + H(+). It participates in porphyrin-containing compound metabolism; protoporphyrin-IX biosynthesis; 5-aminolevulinate from L-glutamyl-tRNA(Glu): step 1/2. It functions in the pathway porphyrin-containing compound metabolism; chlorophyll biosynthesis. Functionally, catalyzes the NADPH-dependent reduction of glutamyl-tRNA(Glu) to glutamate 1-semialdehyde (GSA). The polypeptide is Glutamyl-tRNA reductase (Chlorobium phaeobacteroides (strain DSM 266 / SMG 266 / 2430)).